The chain runs to 451 residues: Tubulin alpha-1A chain (451 aa).

GTP-binding residues include glycine 10, glutamine 11, alanine 12, and glutamine 15. Lysine 40 carries the post-translational modification N6-acetyllysine. GTP contacts are provided by glutamate 71, alanine 99, serine 140, glycine 143, glycine 144, threonine 145, glycine 146, threonine 179, glutamate 183, asparagine 206, tyrosine 224, asparagine 228, and leucine 252. Glutamate 71 serves as a coordination point for Mg(2+). Residue glutamate 254 is part of the active site. 3'-nitrotyrosine is present on tyrosine 282. Serine 439 bears the Phosphoserine mark. 2 positions are modified to 5-glutamyl polyglutamate: glutamate 443 and glutamate 445. 3'-nitrotyrosine is present on tyrosine 451.

The protein belongs to the tubulin family. As to quaternary structure, heterodimer of alpha- and beta-tubulin. A typical microtubule is a hollow water-filled tube with an outer diameter of 25 nm and an inner diameter of 15 nM. Alpha-beta heterodimers associate head-to-tail to form protofilaments running lengthwise along the microtubule wall with the beta-tubulin subunit facing the microtubule plus end conferring a structural polarity. Microtubules usually have 13 protofilaments but different protofilament numbers can be found in some organisms and specialized cells. Interacts with gamma-tubulin; the interaction allows microtubules to nucleate from the gamma-tubulin ring complex (gTuRC). Nascent microtubule interacts (via alpha-tubulin MREC motif) with TTC5/STRAP; this interaction may result in tubulin mRNA-targeted degradation. Component of sperm flagellar doublet microtubules. Mg(2+) serves as cofactor. Post-translationally, some glutamate residues at the C-terminus are polyglycylated, resulting in polyglycine chains on the gamma-carboxyl group. Glycylation is mainly limited to tubulin incorporated into axonemes (cilia and flagella) whereas glutamylation is prevalent in neuronal cells, centrioles, axonemes, and the mitotic spindle. Both modifications can coexist on the same protein on adjacent residues, and lowering polyglycylation levels increases polyglutamylation, and reciprocally. Cilia and flagella glycylation is required for their stability and maintenance. Flagella glycylation controls sperm motility. In terms of processing, some glutamate residues at the C-terminus are polyglutamylated, resulting in polyglutamate chains on the gamma-carboxyl group. Polyglutamylation plays a key role in microtubule severing by spastin (SPAST). SPAST preferentially recognizes and acts on microtubules decorated with short polyglutamate tails: severing activity by SPAST increases as the number of glutamates per tubulin rises from one to eight, but decreases beyond this glutamylation threshold. Glutamylation is also involved in cilia motility. Acetylation of alpha chains at Lys-40 is located inside the microtubule lumen. This modification has been correlated with increased microtubule stability, intracellular transport and ciliary assembly. Post-translationally, methylation of alpha chains at Lys-40 is found in mitotic microtubules and is required for normal mitosis and cytokinesis contributing to genomic stability. In terms of processing, nitration of Tyr-451 is irreversible and interferes with normal dynein intracellular distribution. Undergoes a tyrosination/detyrosination cycle, the cyclic removal and re-addition of a C-terminal tyrosine residue by the enzymes tubulin tyrosine carboxypeptidase (MATCAP1, VASH1 or VASH2) and tubulin tyrosine ligase (TTL), respectively. Post-translationally, tyrosination promotes microtubule interaction with CAP-Gly domain-containing proteins such as CLIP1, CLIP2 and DCTN1. Tyrosination regulates the initiation of dynein-dynactin motility via interaction with DCTN1, which brings the dynein-dynactin complex into contact with microtubules. In neurons, tyrosinated tubulins mediate the initiation of retrograde vesicle transport. In terms of processing, detyrosination is involved in metaphase plate congression by guiding chromosomes during mitosis: detyrosination promotes interaction with CENPE, promoting pole-proximal transport of chromosomes toward the equator. Detyrosination increases microtubules-dependent mechanotransduction in dystrophic cardiac and skeletal muscle. In cardiomyocytes, detyrosinated microtubules are required to resist to contractile compression during contraction: detyrosination promotes association with desmin (DES) at force-generating sarcomeres, leading to buckled microtubules and mechanical resistance to contraction.

It is found in the cytoplasm. It localises to the cytoskeleton. The protein localises to the flagellum axoneme. The enzyme catalyses GTP + H2O = GDP + phosphate + H(+). Its function is as follows. Tubulin is the major constituent of microtubules, protein filaments consisting of alpha- and beta-tubulin heterodimers. Microtubules grow by the addition of GTP-tubulin dimers to the microtubule end, where a stabilizing cap forms. Below the cap, tubulin dimers are in GDP-bound state, owing to GTPase activity of alpha-tubulin. The chain is Tubulin alpha-1A chain (TUBA1A) from Sus scrofa (Pig).